Here is a 220-residue protein sequence, read N- to C-terminus: Large ribosomal subunit protein bL9 (220 aa).

A compositionally biased stretch (low complexity) spans 167–184 (AAAEVEQAEDVAAAEQQD). The interval 167–220 (AAAEVEQAEDVAAAEQQDSSPVDDHADDADGVADGEGRDEGAGDASDEEEMPST) is disordered. Acidic residues predominate over residues 211-220 (ASDEEEMPST).

This sequence belongs to the bacterial ribosomal protein bL9 family.

Its function is as follows. Binds to the 23S rRNA. The sequence is that of Large ribosomal subunit protein bL9 from Anaplasma marginale (strain Florida).